The following is a 475-amino-acid chain: Bystin (475 aa).

Basic residues-rich tracts occupy residues 1–12 (MGKDVKKVHKLR) and 29–41 (KPHK…RKKK). 2 disordered regions span residues 1-57 (MGKD…ESVI) and 106-149 (DFID…QFGV). Composition is skewed to acidic residues over residues 45 to 54 (ENDTGIDETE) and 107 to 119 (FIDD…DADQ).

Belongs to the bystin family.

The protein resides in the nucleus. Its subcellular location is the nucleolus. Required for processing of 20S pre-rRNA precursor and biogenesis of 40S ribosomal subunits. The chain is Bystin (bysl) from Dictyostelium discoideum (Social amoeba).